The primary structure comprises 553 residues: MQATIKRYPTSPISGQTLGTSGLRKRASEVENTPNYLENFVNAMFNAASNLQKPGKIIIGGDGRYLNLKALDIIIRVALSRGFTDIVVGKSGFMSTPAESATIIRRKAEAGFIMTASHNPAGKEHGDFGLKLNMSNGGPAPIEVTSKIEESARNIKEIVIAELNKPLNIDSVGDIEIECEGKKAVVHVIDPLEDYIAYLHECFDFENLKQFVSKYHLKVQVDGFNAVTGIYNKKVFCELLGLPESSLKNAIPMPDFGGKHPDPNLTYAAELVHAVIPEDSPYDIGFAFDGDGDRNLIVGRGAFVSPSDSLAILSTKYNDIPFFVKNGFKGVARSMPTSAAVDHVTSITETPTGWKFFGNLMDSGKISLCGEESFGTGCCGIREKDGIWAALCWVSILAAESERAQRLVGVKEILESHWAKYGRNYYQRYDFDEVDKKAAEDMMQMMRDNAKTVKCDLNGVPLKFCDDFEYHDSVDGSVTSKQGIRFVFEDGSRIIFRLSGTGSVGATIRVYFDKYSKDYKADQTKVLADMVTVAYAVSQITKFTGREKPSVVT.

A disordered region spans residues 1-25 (MQATIKRYPTSPISGQTLGTSGLRK). The span at 11 to 20 (SPISGQTLGT) shows a compositional bias: polar residues. Substrate-binding positions include T20, R24, 117-118 (SH), and K131. The active-site Phosphoserine intermediate is S117. Position 117 (S117) interacts with Mg(2+). The Mg(2+) site is built by D289, D291, and D293. Substrate-binding positions include 293–294 (DR), T352, 371–373 (EES), K384, and R509.

The protein belongs to the phosphohexose mutase family. Mg(2+) serves as cofactor.

Its subcellular location is the cytoplasm. It carries out the reaction alpha-D-glucose 1-phosphate = alpha-D-glucose 6-phosphate. Catalyzes the reversible conversion of glucose 1-phosphate into glucose 6-phosphate. This enzyme participates in both the breakdown and synthesis of glucose. The protein is Phosphoglucomutase of Entamoeba histolytica (strain ATCC 30459 / HM-1:IMSS / ABRM).